Consider the following 488-residue polypeptide: UDP-N-acetylmuramate--L-alanine ligase (488 aa).

Glycine 127–threonine 133 serves as a coordination point for ATP.

The protein belongs to the MurCDEF family.

The protein resides in the cytoplasm. It catalyses the reaction UDP-N-acetyl-alpha-D-muramate + L-alanine + ATP = UDP-N-acetyl-alpha-D-muramoyl-L-alanine + ADP + phosphate + H(+). The protein operates within cell wall biogenesis; peptidoglycan biosynthesis. Cell wall formation. This is UDP-N-acetylmuramate--L-alanine ligase from Shewanella putrefaciens (strain CN-32 / ATCC BAA-453).